The primary structure comprises 167 residues: Probable chorismate pyruvate-lyase (167 aa).

3 residues coordinate substrate: arginine 71, isoleucine 110, and glutamate 150.

The protein belongs to the UbiC family.

Its subcellular location is the cytoplasm. It carries out the reaction chorismate = 4-hydroxybenzoate + pyruvate. Its pathway is cofactor biosynthesis; ubiquinone biosynthesis. In terms of biological role, removes the pyruvyl group from chorismate, with concomitant aromatization of the ring, to provide 4-hydroxybenzoate (4HB) for the ubiquinone pathway. This Acinetobacter baylyi (strain ATCC 33305 / BD413 / ADP1) protein is Probable chorismate pyruvate-lyase.